The sequence spans 139 residues: von Hippel-Lindau-like protein (139 aa).

Residues 1-22 (MPWRAGNGVGLEAQAGTQEAGP) form a disordered region. The segment at 54 to 135 (SRIIICNHSP…GQPVFANITL (82 aa)) is beta-domain.

The protein belongs to the VHL family. As to quaternary structure, interacts via the beta domain with the ODD domain of HIF1A. This interaction is independent of prolyl hydroxylation of HIF1A. Abundantly expressed in the placenta.

In terms of biological role, functions as a dominant-negative VHL to serve as a protector of HIFalpha. This Homo sapiens (Human) protein is von Hippel-Lindau-like protein (VHLL).